Here is a 490-residue protein sequence, read N- to C-terminus: Betaine aldehyde dehydrogenase (490 aa).

K(+) contacts are provided by I27 and D93. Residue 150–152 (GAW) participates in NAD(+) binding. K162 (charge relay system) is an active-site residue. Position 176–179 (176–179 (KPSE)) interacts with NAD(+). V180 provides a ligand contact to K(+). 230 to 233 (GTDT) contacts NAD(+). L246 contacts K(+). The active-site Proton acceptor is the E252. NAD(+)-binding residues include G254, C286, and E387. The active-site Nucleophile is the C286. C286 carries the cysteine sulfenic acid (-SOH) modification. 2 residues coordinate K(+): K457 and G460. Residue E464 is the Charge relay system of the active site.

It belongs to the aldehyde dehydrogenase family. As to quaternary structure, dimer of dimers. K(+) serves as cofactor.

The catalysed reaction is betaine aldehyde + NAD(+) + H2O = glycine betaine + NADH + 2 H(+). Its pathway is amine and polyamine biosynthesis; betaine biosynthesis via choline pathway; betaine from betaine aldehyde: step 1/1. Involved in the biosynthesis of the osmoprotectant glycine betaine. Catalyzes the irreversible oxidation of betaine aldehyde to the corresponding acid. The sequence is that of Betaine aldehyde dehydrogenase from Pseudomonas fluorescens (strain Pf0-1).